The primary structure comprises 102 residues: MYAIIKTGGKQVKVEVGQAIYVEKLNVEAGEKVVFDEVILVGGESTKVGAPTVAGATVEGTVEKHGKQKKVVTFQYKPKKHSHRKQGHRQPYTKVMIEAINA.

It belongs to the bacterial ribosomal protein bL21 family. As to quaternary structure, part of the 50S ribosomal subunit. Contacts protein L20.

This protein binds to 23S rRNA in the presence of protein L20. The polypeptide is Large ribosomal subunit protein bL21 (Enterococcus faecalis (strain ATCC 700802 / V583)).